A 375-amino-acid chain; its full sequence is Lipid-A-disaccharide synthase (375 aa).

It belongs to the LpxB family.

It carries out the reaction a lipid X + a UDP-2-N,3-O-bis[(3R)-3-hydroxyacyl]-alpha-D-glucosamine = a lipid A disaccharide + UDP + H(+). Its pathway is bacterial outer membrane biogenesis; LPS lipid A biosynthesis. Condensation of UDP-2,3-diacylglucosamine and 2,3-diacylglucosamine-1-phosphate to form lipid A disaccharide, a precursor of lipid A, a phosphorylated glycolipid that anchors the lipopolysaccharide to the outer membrane of the cell. In Pseudomonas entomophila (strain L48), this protein is Lipid-A-disaccharide synthase.